The following is a 301-amino-acid chain: Recombination-associated protein RdgC (301 aa).

It belongs to the RdgC family.

The protein localises to the cytoplasm. Its subcellular location is the nucleoid. Its function is as follows. May be involved in recombination. The polypeptide is Recombination-associated protein RdgC (Xanthomonas axonopodis pv. citri (strain 306)).